The chain runs to 96 residues: Acylphosphatase (96 aa).

The Acylphosphatase-like domain occupies 11-96 (ARRWYVRGRV…ITSYDSFRIR (86 aa)). Active-site residues include R26 and N44.

This sequence belongs to the acylphosphatase family.

The enzyme catalyses an acyl phosphate + H2O = a carboxylate + phosphate + H(+). This is Acylphosphatase (acyP) from Solibacter usitatus (strain Ellin6076).